We begin with the raw amino-acid sequence, 41 residues long: Large ribosomal subunit protein bL36 (41 aa).

This sequence belongs to the bacterial ribosomal protein bL36 family.

In Cereibacter sphaeroides (strain ATCC 17029 / ATH 2.4.9) (Rhodobacter sphaeroides), this protein is Large ribosomal subunit protein bL36.